The primary structure comprises 360 residues: MNAPLGGIWLWLPLLLTWLTPEVNSSWWYMRATGGSSRVMCDNVPGLVSSQRQLCHRHPDVMRAISQGVAEWTAECQYQFRQHRWNCNTLDRDHSLFGRVLLRSSRESAFVYAISSAGVVFAITRACSQGEVKSCSCDPKKMGSAKDSKGIFDWGGCSDNIDYGIKFARAFVDAKERKGKDARALMNLHNNRAGRKAVKRFLKQECKCHGVSGSCTLRTCWLAMADFRKTGDYLWRKYNGAIQVVMNQDGTGFTVANERFKKPTKNDLVYFENSPDYCIRDREAGSLGTAGRVCNLTSRGMDSCEVMCCGRGYDTSHVTRMTKCGCKFHWCCAVRCQDCLEALDVHTCKAPKNADWTTPT.

An N-terminal signal peptide occupies residues 1 to 25; sequence MNAPLGGIWLWLPLLLTWLTPEVNS. 11 disulfides stabilise this stretch: cysteine 76/cysteine 87, cysteine 127/cysteine 135, cysteine 137/cysteine 157, cysteine 206/cysteine 220, cysteine 208/cysteine 215, cysteine 278/cysteine 309, cysteine 294/cysteine 304, cysteine 308/cysteine 348, cysteine 324/cysteine 339, cysteine 326/cysteine 336, and cysteine 331/cysteine 332. The O-palmitoleoyl serine; by PORCN moiety is linked to residue serine 212. N-linked (GlcNAc...) asparagine glycosylation is present at asparagine 295.

The protein belongs to the Wnt family. Palmitoleoylation is required for efficient binding to frizzled receptors. Depalmitoleoylation leads to Wnt signaling pathway inhibition.

It localises to the secreted. The protein resides in the extracellular space. The protein localises to the extracellular matrix. In terms of biological role, ligand for members of the frizzled family of seven transmembrane receptors. Functions in the canonical Wnt signaling pathway that results in activation of transcription factors of the TCF/LEF family. Functions as a upstream regulator of FGF10 expression. Plays an important role in embryonic lung development. May contribute to embryonic brain development by regulating the proliferation of dopaminergic precursors and neurons. This Nomascus leucogenys (Northern white-cheeked gibbon) protein is Protein Wnt-2 (WNT2).